The sequence spans 222 residues: Ribosomal RNA small subunit methyltransferase G (222 aa).

Residues Gly85, Leu90, 108 to 110, 136 to 137, and Arg150 each bind S-adenosyl-L-methionine; these read DAT and VE.

Belongs to the methyltransferase superfamily. RNA methyltransferase RsmG family.

Its subcellular location is the cytoplasm. In terms of biological role, specifically methylates the N7 position of a guanine in 16S rRNA. The sequence is that of Ribosomal RNA small subunit methyltransferase G from Chlorobium phaeobacteroides (strain DSM 266 / SMG 266 / 2430).